Here is a 405-residue protein sequence, read N- to C-terminus: 11-beta-hydroxysteroid dehydrogenase type 2 (405 aa).

82–111 (TRAVLITGCDSGFGKETAKKLDSMGFTVLA) contacts NAD(+). S219 provides a ligand contact to substrate. The Proton acceptor role is filled by Y232. Residues 335-339 (RRRYY) form an essential for protein stability region. Residues 377–387 (QPGQPGTTPPQ) are compositionally biased toward low complexity. The interval 377–405 (QPGQPGTTPPQDAAQDPNLSPGPSPAVAR) is disordered. The span at 396–405 (SPGPSPAVAR) shows a compositional bias: pro residues.

This sequence belongs to the short-chain dehydrogenases/reductases (SDR) family. Interacts with ligand-free cytoplasmic NR3C2. As to expression, expressed in kidney, placenta, pancreas, prostate, ovary, small intestine and colon, and in lower levels in the spleen and testis. At midgestation, expressed at high levels in placenta and in fetal kidney and, at much lower levels, in fetal lung and testis.

It is found in the microsome. The protein localises to the endoplasmic reticulum. The catalysed reaction is an 11beta-hydroxysteroid + NAD(+) = an 11-oxosteroid + NADH + H(+). It catalyses the reaction cortisol + NAD(+) = cortisone + NADH + H(+). The enzyme catalyses corticosterone + NAD(+) = 11-dehydrocorticosterone + NADH + H(+). It carries out the reaction 11beta,17beta-dihydroxyandrost-4-ene-3-one + NAD(+) = 17beta-hydroxyandrost-4-ene-3,11-dione + NADH + H(+). The catalysed reaction is 11beta-hydroxyandrost-4-ene-3,17-dione + NAD(+) = androst-4-ene-3,11,17-trione + NADH + H(+). Its pathway is steroid metabolism. Its activity is regulated as follows. Inhibited by glycyrrhetinic acid (derived from liquorice). In terms of biological role, catalyzes the conversion of biologically active 11beta-hydroxyglucocorticoids (11beta-hydroxysteroid) such as cortisol, to inactive 11-ketoglucocorticoids (11-oxosteroid) such as cortisone, in the presence of NAD(+). Functions as a dehydrogenase (oxidase), thereby decreasing the concentration of active glucocorticoids, thus protecting the nonselective mineralocorticoid receptor from occupation by glucocorticoids. Plays an important role in maintaining glucocorticoids balance during preimplantation and protects the fetus from excessive maternal corticosterone exposure. Catalyzes the oxidation of 11beta-hydroxytestosterone (11beta,17beta-dihydroxyandrost-4-ene-3-one) to 11-ketotestosterone (17beta-hydroxyandrost-4-ene-3,11-dione), a major bioactive androgen. Catalyzes the conversion of 11beta-hydroxyandrostenedione (11beta-hydroxyandrost-4-ene-3,17-dione) to 11-ketoandrostenedione (androst-4-ene-3,11,17-trione), which can be further metabolized to 11-ketotestosterone. Converts 7-beta-25-dihydroxycholesterol to 7-oxo-25-hydroxycholesterol in vitro. 7-beta-25-dihydroxycholesterol (not 7-oxo-25-hydroxycholesterol) acts as a ligand for the G-protein-coupled receptor (GPCR) Epstein-Barr virus-induced gene 2 (EBI2) and may thereby regulate immune cell migration. May protect ovulating oocytes and fertilizing spermatozoa from the adverse effects of cortisol. This is 11-beta-hydroxysteroid dehydrogenase type 2 from Homo sapiens (Human).